We begin with the raw amino-acid sequence, 577 residues long: ABC transporter G family member 4 (577 aa).

The ABC transporter domain maps to Leu6 to Ser248. Gly48–Ser55 provides a ligand contact to ATP. Positions Thr299–Tyr509 constitute an ABC transmembrane type-2 domain. A run of 7 helical transmembrane segments spans residues Leu318 to Leu338, Leu353 to Ile373, Val400 to Val420, Leu429 to Phe449, Ile458 to Phe478, Tyr487 to Asn507, and Phe548 to Leu568.

The protein belongs to the ABC transporter superfamily. ABCG family. Eye pigment precursor importer (TC 3.A.1.204) subfamily.

The protein localises to the membrane. The protein is ABC transporter G family member 4 (ABCG4) of Arabidopsis thaliana (Mouse-ear cress).